Here is a 371-residue protein sequence, read N- to C-terminus: Histidinol-phosphate aminotransferase (371 aa).

Position 229 is an N6-(pyridoxal phosphate)lysine (K229).

Belongs to the class-II pyridoxal-phosphate-dependent aminotransferase family. Histidinol-phosphate aminotransferase subfamily. Homodimer. Requires pyridoxal 5'-phosphate as cofactor.

The enzyme catalyses L-histidinol phosphate + 2-oxoglutarate = 3-(imidazol-4-yl)-2-oxopropyl phosphate + L-glutamate. It functions in the pathway amino-acid biosynthesis; L-histidine biosynthesis; L-histidine from 5-phospho-alpha-D-ribose 1-diphosphate: step 7/9. The sequence is that of Histidinol-phosphate aminotransferase from Roseiflexus castenholzii (strain DSM 13941 / HLO8).